Here is a 330-residue protein sequence, read N- to C-terminus: Beta-ketoacyl-[acyl-carrier-protein] synthase III (330 aa).

Active-site residues include cysteine 114 and histidine 257. Positions 258-262 (QANLR) are ACP-binding. The active site involves asparagine 287.

Belongs to the thiolase-like superfamily. FabH family. In terms of assembly, homodimer.

It is found in the cytoplasm. It carries out the reaction malonyl-[ACP] + acetyl-CoA + H(+) = 3-oxobutanoyl-[ACP] + CO2 + CoA. Its pathway is lipid metabolism; fatty acid biosynthesis. Catalyzes the condensation reaction of fatty acid synthesis by the addition to an acyl acceptor of two carbons from malonyl-ACP. Catalyzes the first condensation reaction which initiates fatty acid synthesis and may therefore play a role in governing the total rate of fatty acid production. Possesses both acetoacetyl-ACP synthase and acetyl transacylase activities. Its substrate specificity determines the biosynthesis of branched-chain and/or straight-chain of fatty acids. In Oleidesulfovibrio alaskensis (strain ATCC BAA-1058 / DSM 17464 / G20) (Desulfovibrio alaskensis), this protein is Beta-ketoacyl-[acyl-carrier-protein] synthase III.